The chain runs to 59 residues: MSIRLRVCVGCVYVRVTVSLPAFNPMRNKIGECTQSHTMCLRAVLLTPHNKKKKHTSCP.

In Homo sapiens (Human), this protein is Protein B3 (B3).